Here is a 147-residue protein sequence, read N- to C-terminus: Probable flagellum biosynthesis repressor protein FlbT (147 aa).

The protein belongs to the FlbT family.

In terms of biological role, has a post-transcriptional repressor function in flagellum biogenesis. Associates with the 5'-UTR of fljK mRNA and promotes its degradation. The sequence is that of Probable flagellum biosynthesis repressor protein FlbT from Mesorhizobium japonicum (strain LMG 29417 / CECT 9101 / MAFF 303099) (Mesorhizobium loti (strain MAFF 303099)).